The primary structure comprises 63 residues: U7-theraphotoxin-Cg1a (63 aa).

The signal sequence occupies residues 1-21 (MKTSILFVIFGLALLFALSVA). The propeptide occupies 22–31 (IEMEEEETDR). Cystine bridges form between Cys-33–Cys-47, Cys-40–Cys-52, and Cys-46–Cys-59.

In terms of tissue distribution, expressed by the venom gland.

It is found in the secreted. In terms of biological role, inhibits preferentially tetrodotoxin-insensitive sodium currents (Nav) on rat cardiac myocytes (IC(50) is 0.26 uM) and has weaker inhibition activity toward tetrodotoxin-sensitive sodium currents on rat dorsal root ganglion (DRG) sensory neurons (IC(50) is 0.83 uM) and on cockroach dorsal unpaired median (DUM) neurons (IC(50) is 1.19 uM). Has no significant effect on potassium currents on DRG neurons. The sequence is that of U7-theraphotoxin-Cg1a from Chilobrachys guangxiensis (Chinese earth tiger tarantula).